Here is a 61-residue protein sequence, read N- to C-terminus: Metallothionein-1A (61 aa).

N-acetylmethionine is present on Met-1. Residues 1 to 29 are beta; sequence MDPNCSCATGGSCTCTGSCKCKECKCTSC. A divalent metal cation is bound by residues Cys-5, Cys-7, Cys-13, Cys-15, Cys-19, Cys-21, Cys-24, Cys-26, Cys-29, Cys-33, Cys-34, Cys-36, Cys-37, Cys-41, Cys-44, Cys-48, Cys-50, and Cys-57. The segment at 30–61 is alpha; it reads KKSCCSCCPMSCAKCAQGCICKGASEKCSCCA. Ser-58 is subject to Phosphoserine. Positions 59 and 60 each coordinate a divalent metal cation.

The protein belongs to the metallothionein superfamily. Type 1 family. Monomer.

Its function is as follows. Metallothioneins have a high content of cysteine residues that bind various heavy metals; these proteins are transcriptionally regulated by both heavy metals and glucocorticoids. The chain is Metallothionein-1A (MT1A) from Homo sapiens (Human).